Here is a 735-residue protein sequence, read N- to C-terminus: Ion-translocating oxidoreductase complex subunit C (735 aa).

4Fe-4S ferredoxin-type domains are found at residues 368–397 (MGAPQEEKSCIRCSACADACPADLLPQQLY) and 407–436 (KATAHHIADCIECGACAWVCPSNIPLVQYF). Residues C377, C380, C383, C387, C416, C419, C422, and C426 each contribute to the [4Fe-4S] cluster site. The interval 534–715 (QARAKQAAHP…AVDPRKAAVA (182 aa)) is disordered. Residues 666 to 689 (QQAGSEPAEPAAPRKAAVEAAIAR) show a composition bias toward low complexity.

It belongs to the 4Fe4S bacterial-type ferredoxin family. RnfC subfamily. The complex is composed of six subunits: RsxA, RsxB, RsxC, RsxD, RsxE and RsxG. [4Fe-4S] cluster serves as cofactor.

The protein localises to the cell inner membrane. Its function is as follows. Part of a membrane-bound complex that couples electron transfer with translocation of ions across the membrane. Required to maintain the reduced state of SoxR. This is Ion-translocating oxidoreductase complex subunit C from Salmonella paratyphi B (strain ATCC BAA-1250 / SPB7).